A 402-amino-acid polypeptide reads, in one-letter code: Flavohemoprotein (402 aa).

Residues 1-138 form the Globin domain; it reads MLSPEVRALV…LADLLIGRER (138 aa). Histidine 85 is a binding site for heme b. Catalysis depends on charge relay system residues tyrosine 95 and glutamate 137. The segment at 149-402 is reductase; sequence GGWTGWRAFK…AEVFGTGGVA (254 aa). Residues 152 to 261 enclose the FAD-binding FR-type domain; that stretch reads TGWRAFKVVR…SPPQGDFTLD (110 aa). FAD-binding positions include tyrosine 190 and 206–209; that span reads RQYS. 274-279 is an NADP(+) binding site; that stretch reads GVGLTP. 395–398 lines the FAD pocket; sequence VFGT.

It belongs to the globin family. Two-domain flavohemoproteins subfamily. In the C-terminal section; belongs to the flavoprotein pyridine nucleotide cytochrome reductase family. The cofactor is heme b. FAD serves as cofactor.

The enzyme catalyses 2 nitric oxide + NADPH + 2 O2 = 2 nitrate + NADP(+) + H(+). The catalysed reaction is 2 nitric oxide + NADH + 2 O2 = 2 nitrate + NAD(+) + H(+). Is involved in NO detoxification in an aerobic process, termed nitric oxide dioxygenase (NOD) reaction that utilizes O(2) and NAD(P)H to convert NO to nitrate, which protects the bacterium from various noxious nitrogen compounds. Therefore, plays a central role in the inducible response to nitrosative stress. This Bordetella pertussis (strain Tohama I / ATCC BAA-589 / NCTC 13251) protein is Flavohemoprotein.